The sequence spans 466 residues: Glutamate decarboxylase beta (466 aa).

Residues threonine 62 and asparagine 83 each coordinate substrate. Residues 126 to 127 (SS), threonine 212, and histidine 275 contribute to the pyridoxal 5'-phosphate site. Lysine 276 bears the N6-(pyridoxal phosphate)lysine mark. Residues lysine 446, lysine 453, and lysine 464 each carry the N6-acetyllysine modification.

It belongs to the group II decarboxylase family. In terms of assembly, homohexamer composed of three dimers. The cofactor is pyridoxal 5'-phosphate.

The enzyme catalyses L-glutamate + H(+) = 4-aminobutanoate + CO2. Its function is as follows. Converts glutamate to gamma-aminobutyrate (GABA), consuming one intracellular proton in the reaction. The gad system helps to maintain a near-neutral intracellular pH when cells are exposed to extremely acidic conditions. The ability to survive transit through the acidic conditions of the stomach is essential for successful colonization of the mammalian host by commensal and pathogenic bacteria. This chain is Glutamate decarboxylase beta (gadB), found in Shigella flexneri.